A 278-amino-acid chain; its full sequence is RsbT co-antagonist protein RsbRD (278 aa).

Positions 160-271 (SAPIMPITDG…QSLAKALANK (112 aa)) constitute an STAS domain. A Phosphothreonine modification is found at Thr181.

Probably present in the stressosome with RsbRA, RsbRB, RsbRC and RsbS. In terms of processing, phosphorylated by RsbT.

Its function is as follows. One of 4 functionally non-identical RsbR paralogs, it functions in the environmental signaling branch of the general stress response. Negative regulator of sigma-B activity. Non-phosphorylated RsbS binds to RsbT, preventing its association with RsbU. Requires any one of RsbRA, RsbRB, RsbRC or RsbRD to sequester RsbT. When RsbS and the RsbR paralog(s) are phosphorylated, they release RsbT, which can then bind and activate RsbU. This is RsbT co-antagonist protein RsbRD (rsbRD) from Bacillus subtilis (strain 168).